The primary structure comprises 281 residues: Very-long-chain (3R)-3-hydroxyacyl-CoA dehydratase 1 (281 aa).

Over 1-68 (MGKGDWRQGR…RRLGLLATAW (68 aa)) the chain is Cytoplasmic. The helical transmembrane segment at 69-88 (LTFYNIAMTAGWLVLAIAMV) threads the bilayer. Residues 89–107 (RFYMEKGTHRGLYKSIQKT) lie on the Lumenal side of the membrane. The helical transmembrane segment at 108–124 (LKFFQTFALLEVVHCLI) threads the bilayer. The Cytoplasmic segment spans residues 125–134 (GIVPTSVLVT). The helical transmembrane segment at 135–152 (GVQVSSRIFMVWLITHSI) threads the bilayer. The Lumenal segment spans residues 153-158 (KPIQNE). A helical membrane pass occupies residues 159–173 (ESVVLFLVSWTVTEI). Over 174–196 (TRYSFYTFSLLDHLPHFIKWARY) the chain is Cytoplasmic. The helical transmembrane segment at 197-214 (NLFIILYPVGVAGELLTI) threads the bilayer. Catalysis depends on residues Y203 and E210. Residues 215-244 (YAALPYVKKSGMFSVRLPNKYNVSFDYYYF) are Lumenal-facing. N236 carries N-linked (GlcNAc...) asparagine glycosylation. A helical membrane pass occupies residues 245–262 (LLITMASYIPLFPQLYFH). Over 263–281 (MLRQRRKVLHGEVIAEKDD) the chain is Cytoplasmic.

It belongs to the very long-chain fatty acids dehydratase HACD family. May interact with enzymes of the ELO family (including ELOVL1); with those enzymes that mediate condensation, the first of the four steps of the reaction cycle responsible for fatty acids elongation, may be part of a larger fatty acids elongase complex. Interacts with TECR. Post-translationally, N-glycosylated. As to expression, expressed at high levels in heart, skeletal muscle and testis, weak expression in kidney and liver.

It is found in the endoplasmic reticulum membrane. It catalyses the reaction a very-long-chain (3R)-3-hydroxyacyl-CoA = a very-long-chain (2E)-enoyl-CoA + H2O. It carries out the reaction (3R)-hydroxyhexadecanoyl-CoA = (2E)-hexadecenoyl-CoA + H2O. The catalysed reaction is (3R)-hydroxyoctadecanoyl-CoA = (2E)-octadecenoyl-CoA + H2O. The enzyme catalyses (3R)-hydroxyeicosanoyl-CoA = (2E)-eicosenoyl-CoA + H2O. It catalyses the reaction (3R)-hydroxydocosanoyl-CoA = (2E)-docosenoyl-CoA + H2O. It carries out the reaction (3R)-hydroxytetracosanoyl-CoA = (2E)-tetracosenoyl-CoA + H2O. The catalysed reaction is (3R)-hydroxyhexacosanoyl-CoA = (2E)-hexacosenoyl-CoA + H2O. The protein operates within lipid metabolism; fatty acid biosynthesis. This Mus musculus (Mouse) protein is Very-long-chain (3R)-3-hydroxyacyl-CoA dehydratase 1.